Reading from the N-terminus, the 72-residue chain is UPF0270 protein ETA_31870 (72 aa).

The protein belongs to the UPF0270 family.

The sequence is that of UPF0270 protein ETA_31870 from Erwinia tasmaniensis (strain DSM 17950 / CFBP 7177 / CIP 109463 / NCPPB 4357 / Et1/99).